A 515-amino-acid polypeptide reads, in one-letter code: MKKKILLMMSLISVFFAWQLTQAKQVLAEGKVKVVTTFYPVYEFTKGVIGNDGDVSMLMKAGTEPHDFEPSTKDIKKIQDADAFVYMDDNMETWVSDVKKSLTSKKVTIVKGTGNMLLVAGAGHDHHHEDADKKHEHNKHSEEGHNHAFDPHVWLSPYRSITVVENIRDSLSKAYPEKAENFKANAATYIEKLKELDKDYTAALSDAKQKSFVTQHAAFGYMALDYGLNQISINGVTPDAEPSAKRIATLSKYVKKYGIKYIYFEENASSKVAKTLAKEAGVKAAVLSPLEGLTKKEMKAGQDYFTVMRKNLETLRLTTDVAGKEILPEKDTTKTVYNGYFKDKEVKDRQLSDWSGSWQSVYPYLQDGTLDQVWDYKAKKSKGKMTAAEYKDYYTTGYKTDVEQIKINGKKKTMTFVRNGEKKTFTYTYAGKEILTYPKGNRGVRFMFEAKEPNAGEFKYVQFSDHAIAPEKAEHFHLYWGGDSQEKLHKELEHWPTYYGSDLSGREIAQEINAH.

Positions 1–28 (MKKKILLMMSLISVFFAWQLTQAKQVLA) are cleaved as a signal peptide. His66 serves as a coordination point for Zn(2+). Residues 125–148 (DHHHEDADKKHEHNKHSEEGHNHA) are disordered. Residues 129–148 (EDADKKHEHNKHSEEGHNHA) form a his-rich loop region. Zn(2+) contacts are provided by His152, His216, and Glu291.

It belongs to the bacterial solute-binding protein 9 family.

Part of the ATP-binding cassette (ABC) transport system AdcABC involved in zinc import. Binds zinc with high affinity and specificity and delivers it to the membrane permease for translocation into the cytoplasm. This is Zinc-binding protein AdcA (adcA) from Streptococcus pyogenes serotype M18 (strain MGAS8232).